A 341-amino-acid polypeptide reads, in one-letter code: MKKDIIILGIESSCDDTSAAVVRNETMLSNVIAGQAVHKAYGGVVPELASRAHQQNIVPVVSEAIKRAGIRKEEIDAIAFTRGPGLLGSLLVGTSFAKGLSLSLGIPMLEVNHLHAHVLANFLREPGEESQHPSFPFLCLLVSGGNSQIILVRSPYDMEVIGQTIDDAAGEAFDKCAKVMGLGYPGGPIVNKLASEGNPDAFRFARPHVSGYDYSFSGLKTSFLYTLRDKLAEDPDFIEKNKADLCASLQHTVIDILMKKLRQAAKDHSIKQVALAGGVSANTGLRDAFHDHARRYGWTVFIPKFAYTTDNAAMVAISGYYKYLQGDFCPIDAVPFSRITV.

Fe cation contacts are provided by histidine 113 and histidine 117. Substrate contacts are provided by residues leucine 141 to glycine 145, aspartate 174, glycine 187, and asparagine 282. Position 310 (aspartate 310) interacts with Fe cation.

It belongs to the KAE1 / TsaD family. Requires Fe(2+) as cofactor.

It localises to the cytoplasm. The enzyme catalyses L-threonylcarbamoyladenylate + adenosine(37) in tRNA = N(6)-L-threonylcarbamoyladenosine(37) in tRNA + AMP + H(+). Functionally, required for the formation of a threonylcarbamoyl group on adenosine at position 37 (t(6)A37) in tRNAs that read codons beginning with adenine. Is involved in the transfer of the threonylcarbamoyl moiety of threonylcarbamoyl-AMP (TC-AMP) to the N6 group of A37, together with TsaE and TsaB. TsaD likely plays a direct catalytic role in this reaction. The polypeptide is tRNA N6-adenosine threonylcarbamoyltransferase (Porphyromonas gingivalis (strain ATCC BAA-308 / W83)).